We begin with the raw amino-acid sequence, 256 residues long: Ribonuclease HII (256 aa).

The RNase H type-2 domain maps to A72 to N256. The a divalent metal cation site is built by D78, E79, and D170.

Belongs to the RNase HII family. The cofactor is Mn(2+). Mg(2+) serves as cofactor.

It is found in the cytoplasm. The enzyme catalyses Endonucleolytic cleavage to 5'-phosphomonoester.. Functionally, endonuclease that specifically degrades the RNA of RNA-DNA hybrids. This Staphylococcus saprophyticus subsp. saprophyticus (strain ATCC 15305 / DSM 20229 / NCIMB 8711 / NCTC 7292 / S-41) protein is Ribonuclease HII.